A 607-amino-acid chain; its full sequence is Glycerophosphodiester phosphodiesterase domain-containing protein 5 (607 aa).

Topologically, residues M1 to R42 are cytoplasmic. 2 disulfide bridges follow: C15–C18 and C25–C571. The helical transmembrane segment at L43–W63 threads the bilayer. Over G64–P89 the chain is Extracellular. The chain crosses the membrane as a helical span at residues I90 to C110. Residues H111–K125 lie on the Cytoplasmic side of the membrane. The chain crosses the membrane as a helical span at residues M126–W146. Topologically, residues E147–T160 are extracellular. A helical transmembrane segment spans residues A161–G181. Over Q182–Q192 the chain is Cytoplasmic. The helical transmembrane segment at L193–I213 threads the bilayer. Residues S214–Y496 lie on the Extracellular side of the membrane. The 258-residue stretch at P228–P485 folds into the GP-PDE domain. N-linked (GlcNAc...) asparagine glycosylation is found at N301, N336, N352, N374, and N448. A helical membrane pass occupies residues C497 to L517. Over Q518–H607 the chain is Cytoplasmic. Residues A582–H607 are disordered.

This sequence belongs to the glycerophosphoryl diester phosphodiesterase family. In terms of assembly, interacts with PRDX1; forms a mixed-disulfide with PRDX1, leading to disrupt intramolecular disulfide bond between Cys-25 and Cys-571. Intramolecular disulfide bond between Cys-25 and Cys-571 is reduced by PRDX1. Detected in brain, lung, heart, kidney and testis.

The protein localises to the endomembrane system. It is found in the cytoplasm. Its subcellular location is the perinuclear region. It localises to the cell projection. The protein resides in the growth cone. It carries out the reaction a 1,2-diacyl-sn-glycero-3-phospho-(1D-myo-inositol-4,5-bisphosphate) + H2O = 1D-myo-inositol 1,4,5-trisphosphate + a 1,2-diacyl-sn-glycerol + H(+). It catalyses the reaction sn-glycerol 3-phosphocholine + H2O = sn-glycerol 3-phosphate + choline + H(+). Its activity is regulated as follows. Inhibited by high level of NaCl or urea. Glycerophosphodiester phosphodiesterase that promotes neurite formation and drives spinal motor neuron differentiation. Mediates the cleavage of glycosylphosphatidylinositol (GPI) anchor of target proteins: removes the GPI-anchor of RECK, leading to release RECK from the plasma membrane. May contribute to the osmotic regulation of cellular glycerophosphocholine. This is Glycerophosphodiester phosphodiesterase domain-containing protein 5 from Mus musculus (Mouse).